The sequence spans 634 residues: ATP-dependent clpX-like chaperone, mitochondrial (634 aa).

The N-terminal 56 residues, 1–56 (MSSCGACTCGAAAARLLTTSLTSAQRGISCGRIHVPVLGRLGTTLDAQALRRAPLR), are a transit peptide targeting the mitochondrion. Residues 69 to 102 (DGANKDGSGDGNKKSVTEGSSKKSGSGNSGKGGN) form a disordered region. Positions 70 to 84 (GANKDGSGDGNKKSV) are enriched in basic and acidic residues. The segment covering 85 to 94 (TEGSSKKSGS) has biased composition (low complexity). In terms of domain architecture, ClpX-type ZB spans 94 to 147 (SGNSGKGGNQLRCPKCGDLCTHVETFVSSTRFVKCEKCHHFFVVLSEADSKKSI). Cysteine 106, cysteine 109, cysteine 128, and cysteine 131 together coordinate Zn(2+). Position 295 to 302 (295 to 302 (PTGSGKTL)) interacts with ATP. Lysine 438 carries the post-translational modification N6-acetyllysine. Over residues 599 to 611 (KEPGYIRAPSKES) the composition is skewed to basic and acidic residues. Residues 599-634 (KEPGYIRAPSKESSEEEYDSGVEEDGWPRQADAANS) form a disordered region. The segment covering 612 to 623 (SEEEYDSGVEED) has biased composition (acidic residues). Serine 618 bears the Phosphoserine mark.

It belongs to the ClpX chaperone family. In terms of assembly, homohexamer that forms a ring structure; this hexamerization requires ATP binding. Component of the ClpXP complex formed by the assembly of two CLPP heptameric rings with two CLPX hexameric rings, giving rise to a symmetrical structure with two central CLPP rings flanked by a CLPX ring at either end of the complex. Interacts with TFAM. In terms of tissue distribution, detected in liver (at protein level).

The protein resides in the mitochondrion. The protein localises to the mitochondrion matrix. Its subcellular location is the mitochondrion nucleoid. It carries out the reaction ATP + H2O = ADP + phosphate + H(+). Its function is as follows. ATP-dependent chaperone that functions as an unfoldase. As part of the ClpXP protease complex, it recognizes specific protein substrates, unfolds them using energy derived from ATP hydrolysis, and then translocates them to the proteolytic subunit (CLPP) of the ClpXP complex for degradation. Thanks to its chaperone activity, it also functions in the incorporation of the pyridoxal phosphate cofactor into 5-aminolevulinate synthase, thereby activating 5-aminolevulinate (ALA) synthesis, the first step in heme biosynthesis. This chaperone is also involved in the control of mtDNA nucleoid distribution, by regulating mitochondrial transcription factor A (TFAM) activity. This is ATP-dependent clpX-like chaperone, mitochondrial from Mus musculus (Mouse).